A 629-amino-acid chain; its full sequence is tRNA uridine 5-carboxymethylaminomethyl modification enzyme MnmG (629 aa).

FAD is bound by residues 13-18 (GGGHAG), Val-125, and Ser-180. 273-287 (GPRYCPSIEDKVMRF) contributes to the NAD(+) binding site. Gln-370 provides a ligand contact to FAD.

This sequence belongs to the MnmG family. Homodimer. Heterotetramer of two MnmE and two MnmG subunits. FAD is required as a cofactor.

It is found in the cytoplasm. Functionally, NAD-binding protein involved in the addition of a carboxymethylaminomethyl (cmnm) group at the wobble position (U34) of certain tRNAs, forming tRNA-cmnm(5)s(2)U34. The polypeptide is tRNA uridine 5-carboxymethylaminomethyl modification enzyme MnmG (Psychromonas ingrahamii (strain DSM 17664 / CCUG 51855 / 37)).